The chain runs to 483 residues: Succinate semialdehyde dehydrogenase (483 aa).

Residues 156–157, 180–183, and 233–234 contribute to the NAD(+) site; these read WN, KPAP, and GS. The active-site Proton acceptor is the Glu255. Leu256 lines the NAD(+) pocket. Cys289 serves as the catalytic Nucleophile. An NAD(+)-binding site is contributed by Glu386.

It belongs to the aldehyde dehydrogenase family. Homotetramer.

It carries out the reaction succinate semialdehyde + NAD(+) + H2O = succinate + NADH + 2 H(+). In terms of biological role, involved in the degradation of the pyridine ring of trigonelline (TG; N-methylnicotinate) into succinate and methylamine as carbon and nitrogen sources, respectively. Catalyzes the NAD(+)-dependent oxidation of succinate semialdehyde to succinate. The chain is Succinate semialdehyde dehydrogenase from Acinetobacter baylyi (strain ATCC 33305 / BD413 / ADP1).